The following is a 502-amino-acid chain: Ubiquitin-like-specific protease 1A (502 aa).

Catalysis depends on residues His393, Asp410, and Cys461.

Belongs to the peptidase C48 family.

Protease that catalyzes two essential functions in the SUMO pathway: processing of full-length SUMOs to their mature forms and deconjugation of SUMO from targeted proteins. Cleaves precursors of SUM1 and SUM2, and very inefficiently of SUM3. Seems to be the only ULP1 able to cleave SUM3 precursors. Cleaves SUMO peptides better than SUMO-conjugated proteins. The chain is Ubiquitin-like-specific protease 1A (ULP1A) from Arabidopsis thaliana (Mouse-ear cress).